Consider the following 417-residue polypeptide: MLEQMGIAAKQASYKLAQLSSREKNRVLEKIADELEAQSEIILNANAQDVADARANGLSEAMLDRLALTPARLKGIADDVRQVCNLADPVGRVIDGGVLDSGLRLERRRVPLGVIGVIYEARPNVTVDVASLCLKTGNAVILRGGKETCRTNAATVAVIQDALKSCGLPAGAVQAIDNPDRALVSEMLRMDKYIDMLIPRGGAGLHKLCREQSTIPVITGGIGVCHIYVDESAEIAEALKVIVNAKTQRPSTCNTVETLLVNKNIADSFLPALSKQMAESGVTLHADAAALAQLQTGPAKVVAVKAEEYDDEFLSLDLNVKIVSDLDDAIAHIREHGTQHSDAILTRDMRNAQRFVNEVDSSAVYVNASTRFTDGGQFGLGAEVAVSTQKLHARGPMGLEALTTYKWIGIGDYTIRA.

It belongs to the gamma-glutamyl phosphate reductase family.

The protein localises to the cytoplasm. The catalysed reaction is L-glutamate 5-semialdehyde + phosphate + NADP(+) = L-glutamyl 5-phosphate + NADPH + H(+). It functions in the pathway amino-acid biosynthesis; L-proline biosynthesis; L-glutamate 5-semialdehyde from L-glutamate: step 2/2. In terms of biological role, catalyzes the NADPH-dependent reduction of L-glutamate 5-phosphate into L-glutamate 5-semialdehyde and phosphate. The product spontaneously undergoes cyclization to form 1-pyrroline-5-carboxylate. The sequence is that of Gamma-glutamyl phosphate reductase from Escherichia coli O7:K1 (strain IAI39 / ExPEC).